Consider the following 257-residue polypeptide: ECF RNA polymerase sigma factor SigE (257 aa).

The interval 87-153 (LVRQHADRVY…FLDMVRRRAR (67 aa)) is sigma-70 factor domain-2. The Polymerase core binding motif lies at 111–114 (DLTQ). The interval 186-236 (LQAALASLPPEFRAAVVLCDIEGLSYEEIGATLGVKLGTVRSRIHRGRQAL) is sigma-70 factor domain-4. A DNA-binding region (H-T-H motif) is located at residues 211 to 230 (YEEIGATLGVKLGTVRSRIH).

Belongs to the sigma-70 factor family. ECF subfamily. Interacts transiently with the RNA polymerase catalytic core formed by RpoA, RpoB, RpoC and RpoZ (2 alpha, 1 beta, 1 beta' and 1 omega subunit) to form the RNA polymerase holoenzyme that can initiate transcription. Interacts (via sigma-70 factor domain 4) with cognate anti-sigma-E factor RseA under reducing conditions, which stops the sigma factor from functioning.

Functionally, sigma factors are initiation factors that promote the attachment of RNA polymerase to specific initiation sites and are then released. Extracytoplasmic function (ECF) sigma factors are held in an inactive form by an anti-sigma factor until released. Responds to surface stress (H(2)O(2)). The sequence is that of ECF RNA polymerase sigma factor SigE (sigE) from Mycobacterium tuberculosis (strain ATCC 35801 / TMC 107 / Erdman).